A 227-amino-acid chain; its full sequence is Nudix hydrolase 27, chloroplastic (227 aa).

A chloroplast-targeting transit peptide spans 1-44 (MAVKASGFIGKSAISVHLDFSSFPVKFSCLKQFSVSSPKPLVVL). One can recognise a Nudix hydrolase domain in the interval 61-208 (GYRKNVGICL…KRPVYEHVIK (148 aa)). The Nudix box motif lies at 94–115 (GGADEGEDLRNAAFRELREETG). Residues E109 and E113 each contribute to the Mn(2+) site.

This sequence belongs to the Nudix hydrolase family. Requires Mg(2+) as cofactor. The cofactor is Mn(2+). In terms of tissue distribution, expressed in roots, leaves, stems and inflorescences.

It is found in the plastid. The protein localises to the chloroplast. Its function is as follows. Mediates the hydrolysis of some nucleoside diphosphate derivatives. Can use diadenosine 5',5'''-P(1)P(5) pentaphosphate (Ap(5)A) as substrates. In Arabidopsis thaliana (Mouse-ear cress), this protein is Nudix hydrolase 27, chloroplastic (NUDT27).